Here is a 580-residue protein sequence, read N- to C-terminus: MSLDQAIPEALQALRTRFGAAVRAEQATGEAFPVLWLDASVWEAAHRFLREEIAAPFPLLADLWAIDESLRQHRTGQPASRITLCSHLVSLVRNADLRLKLATDGRAPSIAGVYANADWYEREAHDMFGLDFGRETRRILMPPTWEGHPLLKTHYARATEKPPFVLTDRLFEAEERATITDPDLLGLPKLRDGEELMVLNFGPHHPSTHGVFRILLGLDGEEVVWAWPDIGYHHRGAEKMAERQTWHGFIPYCDRIDYLGGVISELPYLLAVERLCGIAVPPRAQMIRVMLCEFYRIMNHLLFYGTMAQDVGAMSPVFYMFTDREKGHEILNAITGARMHPAFFRIGGVAMDLPTGWDAMVRGFLDWMPARLDEYERMVLRSELFRARTVGVGAYDTDMALTWGTTGPGLRATGCDWDLRKLRPYSGYEQFDFEVPLGQRGDIFDRTRVRADEMRESLKIIRQCLGNMPEGPVKADHPLTTPPPRGAMQKDIETLIAHFLQSSWGTVVPAGEATGQIEGHRGLTQYSVVSDGGTQSYRTRIRTPSFAHLQMIPKIVPGMTVADLVAHIASIDFVMSDVDR.

The interval 1 to 171 is NADH dehydrogenase I subunit C; sequence MSLDQAIPEA…PPFVLTDRLF (171 aa). Residues 195–580 are NADH dehydrogenase I subunit D; that stretch reads ELMVLNFGPH…IDFVMSDVDR (386 aa).

In the N-terminal section; belongs to the complex I 30 kDa subunit family. This sequence in the C-terminal section; belongs to the complex I 49 kDa subunit family. As to quaternary structure, NDH-1 is composed of 13 different subunits. Subunits NuoB, CD, E, F, and G constitute the peripheral sector of the complex.

It localises to the cell inner membrane. The catalysed reaction is a quinone + NADH + 5 H(+)(in) = a quinol + NAD(+) + 4 H(+)(out). In terms of biological role, NDH-1 shuttles electrons from NADH, via FMN and iron-sulfur (Fe-S) centers, to quinones in the respiratory chain. The immediate electron acceptor for the enzyme in this species is believed to be ubiquinone. Couples the redox reaction to proton translocation (for every two electrons transferred, four hydrogen ions are translocated across the cytoplasmic membrane), and thus conserves the redox energy in a proton gradient. The sequence is that of NADH-quinone oxidoreductase subunit C/D from Cereibacter sphaeroides (strain ATCC 17029 / ATH 2.4.9) (Rhodobacter sphaeroides).